The primary structure comprises 264 residues: Putative hydro-lyase Bpet2233 (264 aa).

It belongs to the D-glutamate cyclase family.

The protein is Putative hydro-lyase Bpet2233 of Bordetella petrii (strain ATCC BAA-461 / DSM 12804 / CCUG 43448).